The primary structure comprises 269 residues: Signal recognition particle receptor subunit beta (269 aa).

Residues L35–I55 form a helical membrane-spanning segment. GTP contacts are provided by residues G69–L77 and T90–S93. S110 bears the Phosphoserine mark. G118 lines the GTP pocket. T212 is modified (phosphothreonine). A246 lines the GTP pocket.

The protein belongs to the SRP receptor beta subunit family. Heterodimer with SRPRA.

It is found in the endoplasmic reticulum membrane. In terms of biological role, component of the signal recognition particle (SRP) complex receptor (SR). Ensures, in conjunction with the SRP complex, the correct targeting of the nascent secretory proteins to the endoplasmic reticulum membrane system. May mediate the membrane association of SR. In Rattus norvegicus (Rat), this protein is Signal recognition particle receptor subunit beta (Srprb).